The sequence spans 154 residues: Myoglobin (154 aa).

A Globin domain is found at 2–148; sequence GLSDDEWNHV…FRNDMASKYK (147 aa). A nitrite-binding site is contributed by His-65. An O2-binding site is contributed by His-65. His-94 serves as a coordination point for heme b.

Belongs to the globin family. As to quaternary structure, monomeric.

It localises to the cytoplasm. The protein localises to the sarcoplasm. The enzyme catalyses Fe(III)-heme b-[protein] + nitric oxide + H2O = Fe(II)-heme b-[protein] + nitrite + 2 H(+). It catalyses the reaction H2O2 + AH2 = A + 2 H2O. Functionally, monomeric heme protein which primary function is to store oxygen and facilitate its diffusion within muscle tissues. Reversibly binds oxygen through a pentacoordinated heme iron and enables its timely and efficient release as needed during periods of heightened demand. Depending on the oxidative conditions of tissues and cells, and in addition to its ability to bind oxygen, it also has a nitrite reductase activity whereby it regulates the production of bioactive nitric oxide. Under stress conditions, like hypoxia and anoxia, it also protects cells against reactive oxygen species thanks to its pseudoperoxidase activity. In Chelonia mydas (Green sea-turtle), this protein is Myoglobin (MB).